We begin with the raw amino-acid sequence, 341 residues long: S-adenosylmethionine:tRNA ribosyltransferase-isomerase (341 aa).

It belongs to the QueA family. Monomer.

The protein resides in the cytoplasm. The enzyme catalyses 7-aminomethyl-7-carbaguanosine(34) in tRNA + S-adenosyl-L-methionine = epoxyqueuosine(34) in tRNA + adenine + L-methionine + 2 H(+). It functions in the pathway tRNA modification; tRNA-queuosine biosynthesis. In terms of biological role, transfers and isomerizes the ribose moiety from AdoMet to the 7-aminomethyl group of 7-deazaguanine (preQ1-tRNA) to give epoxyqueuosine (oQ-tRNA). The sequence is that of S-adenosylmethionine:tRNA ribosyltransferase-isomerase from Staphylococcus epidermidis (strain ATCC 35984 / DSM 28319 / BCRC 17069 / CCUG 31568 / BM 3577 / RP62A).